A 170-amino-acid polypeptide reads, in one-letter code: Peptide deformylase (170 aa).

Fe cation-binding residues include Cys-91 and His-133. Glu-134 is an active-site residue. His-137 contributes to the Fe cation binding site.

Belongs to the polypeptide deformylase family. It depends on Fe(2+) as a cofactor.

The catalysed reaction is N-terminal N-formyl-L-methionyl-[peptide] + H2O = N-terminal L-methionyl-[peptide] + formate. Functionally, removes the formyl group from the N-terminal Met of newly synthesized proteins. Requires at least a dipeptide for an efficient rate of reaction. N-terminal L-methionine is a prerequisite for activity but the enzyme has broad specificity at other positions. The polypeptide is Peptide deformylase (Histophilus somni (strain 2336) (Haemophilus somnus)).